The sequence spans 268 residues: MHYTNMEIFPVFGISKISNFIANNDCRYYIDVEHQKIISDEINRQMDETVLLTNILSVEVVNDNEMYHLIPHRLSTIILCISSVGGCVISIDNDVNDKNILTFPIDHAVIISPLSKCVVVSKGPTTILVVKADIPSKRLVTSFTNDILYVNNLSLINYLPSSVFIIRRVTDYLDRHICDQIFANNKWYSIITIDDKQYPIPSNCIGMSSAKYINSSIEQDILIHVCNLEHPFDSVYKKMQSYNSLPIKEQILYGRIDNINMSISISVD.

Belongs to the orthopoxvirus OPG165 family.

This is Protein OPG165 (OPG165) from Cynomys gunnisoni (Gunnison's prairie dog).